A 166-amino-acid chain; its full sequence is Cyclin-dependent kinase 4 inhibitor D (166 aa).

Residue Met1 is modified to N-acetylmethionine. 4 ANK repeats span residues 41–69, 73–102, 106–135, and 138–166; these read FGKTALQVMMFGSTAIALELLKQGASPNV, SGTSPVHDAARTGFLDTLKVLVEHGADVNV, TGALPIHLAVQEGHTAVVSFLAAESDLHRR, and RGLTPLELALQRGAQDLVDILQGHMVAPL.

It belongs to the CDKN2 cyclin-dependent kinase inhibitor family. In terms of assembly, interacts with CDK6.

Its subcellular location is the nucleus. It localises to the cytoplasm. Interacts strongly with CDK4 and CDK6 and inhibits them. This Homo sapiens (Human) protein is Cyclin-dependent kinase 4 inhibitor D (CDKN2D).